A 617-amino-acid polypeptide reads, in one-letter code: Chaperone protein HscA homolog (617 aa).

The protein belongs to the heat shock protein 70 family.

In terms of biological role, chaperone involved in the maturation of iron-sulfur cluster-containing proteins. Has a low intrinsic ATPase activity which is markedly stimulated by HscB. The polypeptide is Chaperone protein HscA homolog (Vibrio campbellii (strain ATCC BAA-1116)).